A 372-amino-acid polypeptide reads, in one-letter code: MEWTRGRILGRGSTATVYAAAGHNSDEILAVKSSEVHRSEFLQREAKILSSLSSPYVIGYRGSETKRESNGVVMYNLLMEYAPYGTLTDAAAKDGGRVDETRVVKYTRDILKGLEYIHSKGIVHCDVKGSNVVISEKGEAKIADFGCAKRVDPVFESPVMGTPAFMAPEVARGEKQGKESDIWAVGCTMIEMVTGSPPWTKADSREDPVSVLYRVGYSSETPELPCLLAEEAKDFLEKCLKREANERWTATQLLNHPFLTTKPDIEPVLVPGLISNSPTSVTDQTFWRSVEEEEEEETEEIQKDSRDLDRLSLWGCYSERIGRLKCVGGLDGTRCDMEGGDWIMVRARCEGTMISGSQKELIISENVLVGEL.

The region spanning 3–259 (WTRGRILGRG…ATQLLNHPFL (257 aa)) is the Protein kinase domain. Residues 9–17 (LGRGSTATV) and K32 each bind ATP. D126 (proton acceptor) is an active-site residue. S312 bears the Phosphoserine mark.

This sequence belongs to the protein kinase superfamily. Ser/Thr protein kinase family. In terms of assembly, binds to MKK3.

It localises to the nucleus. The catalysed reaction is L-seryl-[protein] + ATP = O-phospho-L-seryl-[protein] + ADP + H(+). It catalyses the reaction L-threonyl-[protein] + ATP = O-phospho-L-threonyl-[protein] + ADP + H(+). Its function is as follows. Component of the abscisic acid (ABA) signaling pathway that may act as ABA signal transducer in the context of abiotic stresses. Triggers MPK7 activation in a MKK3-dependent manner. Mediates the ABA-dependent activation of the MKK3-MPK7 module. The sequence is that of Mitogen-activated protein kinase kinase kinase 17 from Arabidopsis thaliana (Mouse-ear cress).